Consider the following 188-residue polypeptide: MIGDIIAQRYAQALFDLGKEQSLHEVELYDTALSQIEELLMTSNELTYFLHAPIFTIYEKQGVLLKLLELIDAAQPIKNFCLLLAEKERLPLLTQIINSFKVLLDNAKNIVHGQLITAITLDEKKQSELLISLEKQTNRKLELLFQVNPDILGGIVLHIGDKVFDASLRTQLECIRNTIKKGETNHAY.

The protein belongs to the ATPase delta chain family. As to quaternary structure, F-type ATPases have 2 components, F(1) - the catalytic core - and F(0) - the membrane proton channel. F(1) has five subunits: alpha(3), beta(3), gamma(1), delta(1), epsilon(1). F(0) has three main subunits: a(1), b(2) and c(10-14). The alpha and beta chains form an alternating ring which encloses part of the gamma chain. F(1) is attached to F(0) by a central stalk formed by the gamma and epsilon chains, while a peripheral stalk is formed by the delta and b chains.

It is found in the cell membrane. Functionally, f(1)F(0) ATP synthase produces ATP from ADP in the presence of a proton or sodium gradient. F-type ATPases consist of two structural domains, F(1) containing the extramembraneous catalytic core and F(0) containing the membrane proton channel, linked together by a central stalk and a peripheral stalk. During catalysis, ATP synthesis in the catalytic domain of F(1) is coupled via a rotary mechanism of the central stalk subunits to proton translocation. Its function is as follows. This protein is part of the stalk that links CF(0) to CF(1). It either transmits conformational changes from CF(0) to CF(1) or is implicated in proton conduction. The protein is ATP synthase subunit delta of Lawsonia intracellularis (strain PHE/MN1-00).